A 152-amino-acid polypeptide reads, in one-letter code: Large ribosomal subunit protein bL9 (152 aa).

It belongs to the bacterial ribosomal protein bL9 family.

In terms of biological role, binds to the 23S rRNA. The polypeptide is Large ribosomal subunit protein bL9 (Mycoplasmopsis synoviae (strain 53) (Mycoplasma synoviae)).